The primary structure comprises 152 residues: Catabolic 3-dehydroquinase (152 aa).

Catalysis depends on Y24, which acts as the Proton acceptor. Positions 75, 81, and 88 each coordinate substrate. The active-site Proton donor is the H101. Residues 102-103 and R112 contribute to the substrate site; that span reads IS.

Belongs to the type-II 3-dehydroquinase family. As to quaternary structure, homododecamer. Adopts a ring-like structure, composed of an arrangement of two hexameric rings stacked on top of one another.

It carries out the reaction 3-dehydroquinate = 3-dehydroshikimate + H2O. The protein operates within aromatic compound metabolism; 3,4-dihydroxybenzoate biosynthesis; 3,4-dihydroxybenzoate from 3-dehydroquinate: step 1/2. Is involved in the catabolism of quinate. Allows the utilization of quinate as carbon source via the beta-ketoadipate pathway. The sequence is that of Catabolic 3-dehydroquinase from Phaeosphaeria nodorum (strain SN15 / ATCC MYA-4574 / FGSC 10173) (Glume blotch fungus).